The sequence spans 437 residues: Ribulose bisphosphate carboxylase/oxygenase activase, chloroplastic (437 aa).

The segment covering 1–10 has biased composition (polar residues); that stretch reads MATAVSTIGS. The tract at residues 1–26 is disordered; the sequence is MATAVSTIGSVNRAPPNLNGSSSSAS. 165–172 is a binding site for ATP; sequence GGKGQGKS.

This sequence belongs to the RuBisCO activase family.

It localises to the plastid. It is found in the chloroplast stroma. Functionally, activation of RuBisCO (ribulose-1,5-bisphosphate carboxylase/oxygenase; EC 4.1.1.39) involves the ATP-dependent carboxylation of the epsilon-amino group of lysine leading to a carbamate structure. The polypeptide is Ribulose bisphosphate carboxylase/oxygenase activase, chloroplastic (RCA) (Malus domestica (Apple)).